The chain runs to 177 residues: MKICRICGYQIPEGEFNLLEDGWVCPRCGVGKEELQDSAEPLGGRDPLMLIFRAMTVGLWRVLGNGSQGVTREMGSVIADNIRHGDDPLKSAADYFIEHGFAASISTDTENFALNVKNCSFYGFCCSLEEDGVLLSTCPYANTAAAVLERTTGYRYRIKRNKGDHGHIIEFSRISKK.

The 38-residue stretch at 1-38 folds into the Rubredoxin-like domain; it reads MKICRICGYQIPEGEFNLLEDGWVCPRCGVGKEELQDS. The Fe cation site is built by Cys4, Cys7, Cys25, and Cys28.

Belongs to the rubredoxin family. Fe(3+) serves as cofactor.

The chain is Putative rubredoxin (rdxA) from Methanothermobacter thermautotrophicus (strain ATCC 29096 / DSM 1053 / JCM 10044 / NBRC 100330 / Delta H) (Methanobacterium thermoautotrophicum).